The primary structure comprises 400 residues: Probable transposase for insertion sequence element ISRM3-like (400 aa).

It belongs to the transposase mutator family.

Functionally, required for the transposition of the insertion element. The chain is Probable transposase for insertion sequence element ISRM3-like from Sinorhizobium fredii (strain NBRC 101917 / NGR234).